Reading from the N-terminus, the 203-residue chain is Small ribosomal subunit protein uS4c (203 aa).

The interval 19–43 (PGLTNKSPKAGSDLRKQPRSRKKSQ) is disordered. In terms of domain architecture, S4 RNA-binding spans 89 to 152 (MRLDNILFRL…KSRTLIQNSL (64 aa)).

The protein belongs to the universal ribosomal protein uS4 family. Part of the 30S ribosomal subunit. Contacts protein S5. The interaction surface between S4 and S5 is involved in control of translational fidelity.

The protein localises to the plastid. It localises to the chloroplast. Functionally, one of the primary rRNA binding proteins, it binds directly to 16S rRNA where it nucleates assembly of the body of the 30S subunit. With S5 and S12 plays an important role in translational accuracy. In Jasminum nudiflorum (Winter jasmine), this protein is Small ribosomal subunit protein uS4c (rps4).